A 957-amino-acid polypeptide reads, in one-letter code: Glycine dehydrogenase (decarboxylating) (957 aa).

N6-(pyridoxal phosphate)lysine is present on K708.

It belongs to the GcvP family. In terms of assembly, the glycine cleavage system is composed of four proteins: P, T, L and H. Requires pyridoxal 5'-phosphate as cofactor.

The catalysed reaction is N(6)-[(R)-lipoyl]-L-lysyl-[glycine-cleavage complex H protein] + glycine + H(+) = N(6)-[(R)-S(8)-aminomethyldihydrolipoyl]-L-lysyl-[glycine-cleavage complex H protein] + CO2. Functionally, the glycine cleavage system catalyzes the degradation of glycine. The P protein binds the alpha-amino group of glycine through its pyridoxal phosphate cofactor; CO(2) is released and the remaining methylamine moiety is then transferred to the lipoamide cofactor of the H protein. This Escherichia coli O7:K1 (strain IAI39 / ExPEC) protein is Glycine dehydrogenase (decarboxylating).